The primary structure comprises 466 residues: 3-isopropylmalate dehydratase large subunit (466 aa).

3 residues coordinate [4Fe-4S] cluster: Cys347, Cys407, and Cys410.

It belongs to the aconitase/IPM isomerase family. LeuC type 1 subfamily. Heterodimer of LeuC and LeuD. Requires [4Fe-4S] cluster as cofactor.

It catalyses the reaction (2R,3S)-3-isopropylmalate = (2S)-2-isopropylmalate. It functions in the pathway amino-acid biosynthesis; L-leucine biosynthesis; L-leucine from 3-methyl-2-oxobutanoate: step 2/4. Catalyzes the isomerization between 2-isopropylmalate and 3-isopropylmalate, via the formation of 2-isopropylmaleate. The chain is 3-isopropylmalate dehydratase large subunit from Klebsiella pneumoniae subsp. pneumoniae (strain ATCC 700721 / MGH 78578).